Consider the following 397-residue polypeptide: LL-diaminopimelate aminotransferase (397 aa).

Substrate contacts are provided by tyrosine 14 and glycine 41. Pyridoxal 5'-phosphate contacts are provided by residues tyrosine 71, 104-105, tyrosine 128, asparagine 174, tyrosine 205, and 233-235; these read AK and SFS. 3 residues coordinate substrate: lysine 105, tyrosine 128, and asparagine 174. At lysine 236 the chain carries N6-(pyridoxal phosphate)lysine. Residues arginine 244 and asparagine 275 each coordinate pyridoxal 5'-phosphate. Asparagine 275 and arginine 368 together coordinate substrate.

Belongs to the class-I pyridoxal-phosphate-dependent aminotransferase family. LL-diaminopimelate aminotransferase subfamily. Homodimer. It depends on pyridoxal 5'-phosphate as a cofactor.

The catalysed reaction is (2S,6S)-2,6-diaminopimelate + 2-oxoglutarate = (S)-2,3,4,5-tetrahydrodipicolinate + L-glutamate + H2O + H(+). It functions in the pathway amino-acid biosynthesis; L-lysine biosynthesis via DAP pathway; LL-2,6-diaminopimelate from (S)-tetrahydrodipicolinate (aminotransferase route): step 1/1. Its function is as follows. Involved in the synthesis of meso-diaminopimelate (m-DAP or DL-DAP), required for both lysine and peptidoglycan biosynthesis. Catalyzes the direct conversion of tetrahydrodipicolinate to LL-diaminopimelate. The protein is LL-diaminopimelate aminotransferase of Chlamydia pneumoniae (Chlamydophila pneumoniae).